Reading from the N-terminus, the 677-residue chain is UvrABC system protein B (677 aa).

In terms of domain architecture, Helicase ATP-binding spans 24-412; the sequence is EGVLEGVPAQ…EGIVVEQVIR (389 aa). 37–44 contributes to the ATP binding site; it reads GVTGSGKT. The Beta-hairpin motif lies at 90-113; the sequence is YYDYYQPEAYLPSSDTYIEKDLAI. The Helicase C-terminal domain occupies 429–591; sequence QIDDLMEEIQ…ITPQQIKKAR (163 aa). One can recognise a UVR domain in the interval 635–670; it reads EKSMERTRKLMQEAAKKLEFIEAAQYRDELLKMEDL.

This sequence belongs to the UvrB family. In terms of assembly, forms a heterotetramer with UvrA during the search for lesions. Interacts with UvrC in an incision complex.

It localises to the cytoplasm. In terms of biological role, the UvrABC repair system catalyzes the recognition and processing of DNA lesions. A damage recognition complex composed of 2 UvrA and 2 UvrB subunits scans DNA for abnormalities. Upon binding of the UvrA(2)B(2) complex to a putative damaged site, the DNA wraps around one UvrB monomer. DNA wrap is dependent on ATP binding by UvrB and probably causes local melting of the DNA helix, facilitating insertion of UvrB beta-hairpin between the DNA strands. Then UvrB probes one DNA strand for the presence of a lesion. If a lesion is found the UvrA subunits dissociate and the UvrB-DNA preincision complex is formed. This complex is subsequently bound by UvrC and the second UvrB is released. If no lesion is found, the DNA wraps around the other UvrB subunit that will check the other stand for damage. The chain is UvrABC system protein B from Bacteroides fragilis (strain ATCC 25285 / DSM 2151 / CCUG 4856 / JCM 11019 / LMG 10263 / NCTC 9343 / Onslow / VPI 2553 / EN-2).